The primary structure comprises 238 residues: Purine nucleoside phosphorylase DeoD-type (238 aa).

Residue histidine 5 participates in a purine D-ribonucleoside binding. Phosphate is bound by residues glycine 21, arginine 25, arginine 44, and 88–91 (RVGS). Residues 180–182 (EME) and 204–205 (SD) contribute to the a purine D-ribonucleoside site. Catalysis depends on aspartate 205, which acts as the Proton donor.

Belongs to the PNP/UDP phosphorylase family. As to quaternary structure, homohexamer; trimer of homodimers.

The catalysed reaction is a purine D-ribonucleoside + phosphate = a purine nucleobase + alpha-D-ribose 1-phosphate. The enzyme catalyses a purine 2'-deoxy-D-ribonucleoside + phosphate = a purine nucleobase + 2-deoxy-alpha-D-ribose 1-phosphate. Functionally, catalyzes the reversible phosphorolytic breakdown of the N-glycosidic bond in the beta-(deoxy)ribonucleoside molecules, with the formation of the corresponding free purine bases and pentose-1-phosphate. The polypeptide is Purine nucleoside phosphorylase DeoD-type (Photorhabdus laumondii subsp. laumondii (strain DSM 15139 / CIP 105565 / TT01) (Photorhabdus luminescens subsp. laumondii)).